The sequence spans 298 residues: GTPase Era (298 aa).

An Era-type G domain is found at 7-174 (RSGFVSIIGR…VELVRKALPQ (168 aa)). The G1 stretch occupies residues 15–22 (GRPNVGKS). Position 15–22 (15–22 (GRPNVGKS)) interacts with GTP. Positions 41–45 (QTTRN) are G2. The segment at 62–65 (DTPG) is G3. GTP contacts are provided by residues 62 to 66 (DTPGI) and 124 to 127 (NKVD). The segment at 124 to 127 (NKVD) is G4. The segment at 153-155 (ISA) is G5. Positions 205–283 (TRDEVPYATA…FLELFVRVRK (79 aa)) constitute a KH type-2 domain.

The protein belongs to the TRAFAC class TrmE-Era-EngA-EngB-Septin-like GTPase superfamily. Era GTPase family. In terms of assembly, monomer.

It is found in the cytoplasm. It localises to the cell inner membrane. Functionally, an essential GTPase that binds both GDP and GTP, with rapid nucleotide exchange. Plays a role in 16S rRNA processing and 30S ribosomal subunit biogenesis and possibly also in cell cycle regulation and energy metabolism. In Geobacter metallireducens (strain ATCC 53774 / DSM 7210 / GS-15), this protein is GTPase Era.